The primary structure comprises 291 residues: Acetyl-coenzyme A carboxylase carboxyl transferase subunit beta (291 aa).

In terms of domain architecture, CoA carboxyltransferase N-terminal spans 23–291 (VWHKCPSCTA…PPDLPVEESV (269 aa)). Residues cysteine 27, cysteine 30, cysteine 46, and cysteine 49 each coordinate Zn(2+). The C4-type zinc-finger motif lies at 27–49 (CPSCTAVLYRVELERNLEVCPKC).

The protein belongs to the AccD/PCCB family. Acetyl-CoA carboxylase is a heterohexamer composed of biotin carboxyl carrier protein (AccB), biotin carboxylase (AccC) and two subunits each of ACCase subunit alpha (AccA) and ACCase subunit beta (AccD). The cofactor is Zn(2+).

It localises to the cytoplasm. It catalyses the reaction N(6)-carboxybiotinyl-L-lysyl-[protein] + acetyl-CoA = N(6)-biotinyl-L-lysyl-[protein] + malonyl-CoA. Its pathway is lipid metabolism; malonyl-CoA biosynthesis; malonyl-CoA from acetyl-CoA: step 1/1. Its function is as follows. Component of the acetyl coenzyme A carboxylase (ACC) complex. Biotin carboxylase (BC) catalyzes the carboxylation of biotin on its carrier protein (BCCP) and then the CO(2) group is transferred by the transcarboxylase to acetyl-CoA to form malonyl-CoA. The sequence is that of Acetyl-coenzyme A carboxylase carboxyl transferase subunit beta from Coxiella burnetii (strain Dugway 5J108-111).